The following is a 291-amino-acid chain: tRNA dimethylallyltransferase (291 aa).

Position 9–16 (9–16 (GPTASGKT)) interacts with ATP. Residue 11-16 (TASGKT) coordinates substrate. Residues 34-37 (DSLQ) form an interaction with substrate tRNA region.

This sequence belongs to the IPP transferase family. As to quaternary structure, monomer. Requires Mg(2+) as cofactor.

The enzyme catalyses adenosine(37) in tRNA + dimethylallyl diphosphate = N(6)-dimethylallyladenosine(37) in tRNA + diphosphate. In terms of biological role, catalyzes the transfer of a dimethylallyl group onto the adenine at position 37 in tRNAs that read codons beginning with uridine, leading to the formation of N6-(dimethylallyl)adenosine (i(6)A). The chain is tRNA dimethylallyltransferase from Aster yellows witches'-broom phytoplasma (strain AYWB).